The following is a 388-amino-acid chain: 2-methylene-furan-3-one reductase (388 aa).

A chloroplast-targeting transit peptide spans 1 to 60; the sequence is MEALLSSTTLQLKPLHPPSSFSSLHSPFSSISVLRVKGSKKAETFIQRSNFSTVLPLRVS. Residues Lys-125, 240–241, 263–266, Tyr-281, 330–332, and 377–378 each bind NADP(+); these read GV, STGK, FVV, and RA. A substrate-binding site is contributed by Lys-125.

It belongs to the zinc-containing alcohol dehydrogenase family. Quinone oxidoreductase subfamily. Monomer.

It localises to the plastid. The protein resides in the chloroplast. It catalyses the reaction 4-hydroxy-2,5-dimethyl-furan-3(2H)-one + NADP(+) = 4-hydroxy-5-methyl-2-methylenefuran-3(2H)-one + NADPH + H(+). Enone oxidoreductase involved in the biosynthesis of 4-hydroxy-2,5-dimethyl-3(2H)-furanone (HDMF or furaneol). Can use both NADH and NADPH as the electron donor. The polypeptide is 2-methylene-furan-3-one reductase (EO) (Solanum lycopersicum (Tomato)).